Here is a 255-residue protein sequence, read N- to C-terminus: Lipoprotein-releasing system ATP-binding protein LolD 2 (255 aa).

Positions 9-254 (LEARGIRKSY…SDSAKLETVA (246 aa)) constitute an ABC transporter domain. Residue 45–52 (GRSGSGKS) coordinates ATP.

The protein belongs to the ABC transporter superfamily. Lipoprotein translocase (TC 3.A.1.125) family. In terms of assembly, the complex is composed of two ATP-binding proteins (LolD) and two transmembrane proteins (LolC and LolE).

It localises to the cell inner membrane. Part of the ABC transporter complex LolCDE involved in the translocation of mature outer membrane-directed lipoproteins, from the inner membrane to the periplasmic chaperone, LolA. Responsible for the formation of the LolA-lipoprotein complex in an ATP-dependent manner. The chain is Lipoprotein-releasing system ATP-binding protein LolD 2 from Rhodopirellula baltica (strain DSM 10527 / NCIMB 13988 / SH1).